Reading from the N-terminus, the 264-residue chain is Phosphate import ATP-binding protein PstB 1 (264 aa).

Positions 20–259 (LETRDLNIFY…PKIKLTEDYI (240 aa)) constitute an ABC transporter domain. ATP is bound at residue 52 to 59 (GASGSGKS).

Belongs to the ABC transporter superfamily. Phosphate importer (TC 3.A.1.7) family. In terms of assembly, the complex is composed of two ATP-binding proteins (PstB), two transmembrane proteins (PstC and PstA) and a solute-binding protein (PstS).

The protein resides in the cell membrane. The enzyme catalyses phosphate(out) + ATP + H2O = ADP + 2 phosphate(in) + H(+). Its function is as follows. Part of the ABC transporter complex PstSACB involved in phosphate import. Responsible for energy coupling to the transport system. The sequence is that of Phosphate import ATP-binding protein PstB 1 from Ligilactobacillus salivarius (strain UCC118) (Lactobacillus salivarius).